A 359-amino-acid polypeptide reads, in one-letter code: Acyl-CoA desaturase 3 (359 aa).

The disordered stretch occupies residues 1–34; that stretch reads MPGHLLQEEMTPSYTTTTTITAPPSGSLQNGREK. At 1-72 the chain is on the cytoplasmic side; that stretch reads MPGHLLQEEM…EGPPPKLEYV (72 aa). Residues 11–27 are compositionally biased toward low complexity; it reads TPSYTTTTTITAPPSGS. Residues 73 to 93 form a helical membrane-spanning segment; that stretch reads WRNIILMALLHVGALYGITLV. Asn75 is a substrate binding site. The Lumenal portion of the chain corresponds to 94-97; sequence PSCK. Residues 98–118 traverse the membrane as a helical segment; that stretch reads LYTCLFAFVYYVISIEGIGAG. Residues 119–217 are Cytoplasmic-facing; the sequence is VHRLWSHRTY…EKLVMFQRRY (99 aa). The Fe cation site is built by His120 and His125. Positions 120–125 match the Histidine box-1 motif; the sequence is HRLWSH. Residues Asn148, Arg155, and Asp156 each coordinate substrate. Residues His157, His160, and His161 each contribute to the Fe cation site. Positions 157-161 match the Histidine box-2 motif; that stretch reads HRAHH. Residues Arg188 and Lys189 each coordinate substrate. At Ser203 the chain carries Phosphoserine. Residues 218-237 traverse the membrane as a helical segment; that stretch reads YKPGILLMCFILPTLVPWYC. The Lumenal segment spans residues 238–241; that stretch reads WGET. Residues 242–263 traverse the membrane as a helical segment; that stretch reads FLNSFYVATLLRYAVVLNATWL. Trp262 contributes to the substrate binding site. Topologically, residues 264–359 are cytoplasmic; sequence VNSAAHLYGY…RTGDGSHKSG (96 aa). Residues His269, His298, His301, and His302 each contribute to the Fe cation site. Positions 298-302 match the Histidine box-3 motif; sequence HNYHH.

The protein belongs to the fatty acid desaturase type 1 family. Fe(2+) is required as a cofactor. As to expression, detected in skin, but at lower levels compared to Scd1. Detected in the middlle part of the sebaceous gland, but not in hair follicle. Not detected in liver and brain.

It localises to the endoplasmic reticulum membrane. The protein localises to the microsome membrane. The enzyme catalyses hexadecanoyl-CoA + 2 Fe(II)-[cytochrome b5] + O2 + 2 H(+) = (9Z)-hexadecenoyl-CoA + 2 Fe(III)-[cytochrome b5] + 2 H2O. Its function is as follows. Stearoyl-CoA desaturase that utilizes O(2) and electrons from reduced cytochrome b5 to introduce the first double bond into saturated fatty acyl-CoA substrates. Catalyzes the insertion of a cis double bond at the delta-9 position into fatty acyl-CoA substrates including palmitoyl-CoA. Has a strong preference for saturated fatty acids with chain lengths of 14 or 16 carbon atoms (C14:0 and C16:0), and has only very low activity with stearatate (C18:0). Required for the biosynthesis of membrane phospholipids, cholesterol esters and triglycerides. This is Acyl-CoA desaturase 3 from Mus musculus (Mouse).